A 488-amino-acid chain; its full sequence is UDP-glycosyltransferase 85A3 (488 aa).

UDP-alpha-D-glucose-binding positions include S306, 363-365, 380-388, and 402-405; these read CPQ, HCGWNSTLE, and FAEQ.

Belongs to the UDP-glycosyltransferase family. As to expression, expressed in roots and flowers.

The sequence is that of UDP-glycosyltransferase 85A3 (UGT85A3) from Arabidopsis thaliana (Mouse-ear cress).